Reading from the N-terminus, the 587-residue chain is Prolycopene isomerase 1, chloroplastic (587 aa).

Over residues 1–13 (MLCLSLNSSSTSP) the composition is skewed to low complexity. Positions 1 to 21 (MLCLSLNSSSTSPPKSPLHHS) are disordered. The N-terminal 50 residues, 1-50 (MLCLSLNSSSTSPPKSPLHHSFSRRSMRSWVCSPRVQRKKLGFWSSPKAV), are a transit peptide targeting the chloroplast.

It belongs to the carotenoid/retinoid oxidoreductase family. CrtISO subfamily. NAD(+) serves as cofactor. NADP(+) is required as a cofactor. Requires FAD as cofactor. Up-regulated in the flower buds and flower lip tissue, while it is weakly expressed in leaves.

It is found in the plastid. Its subcellular location is the chloroplast membrane. The catalysed reaction is 7,7',9,9'-tetra-cis-lycopene = all-trans-lycopene. The protein operates within carotenoid biosynthesis; lycopene biosynthesis. Carotene cis-trans-isomerase that converts 7,9,9'-tri-cis-neurosporene to 9'-cis-neurosporene and 7,9,9',7'-tetra-cis-lycopene (also known as prolycopene) into all-trans-lycopene. Isomerization requires redox-active components, suggesting that isomerization is achieved by a reversible redox reaction acting at specific double bonds. Isomerizes adjacent cis-double bonds at C7 and C9 pairwise into the trans-configuration, but is incapable of isomerizing single cis-double bonds at C9 and C9'. The protein is Prolycopene isomerase 1, chloroplastic (CRTISO1) of Oncidium hybrid cultivar (Orchid).